We begin with the raw amino-acid sequence, 197 residues long: dTTP/UTP pyrophosphatase (197 aa).

Residue aspartate 70 is the Proton acceptor of the active site.

This sequence belongs to the Maf family. YhdE subfamily. As to quaternary structure, homodimer. Can also form homotetramers. It depends on a divalent metal cation as a cofactor.

The protein localises to the cytoplasm. It carries out the reaction dTTP + H2O = dTMP + diphosphate + H(+). The enzyme catalyses UTP + H2O = UMP + diphosphate + H(+). The catalysed reaction is 5-methyl-UTP + H2O = 5-methyl-UMP + diphosphate + H(+). It catalyses the reaction psi-UTP + H2O = psi-UMP + diphosphate + H(+). It carries out the reaction 5-methyl-CTP + H2O = 5-methyl-CMP + diphosphate + H(+). Its function is as follows. Nucleoside triphosphate pyrophosphatase that hydrolyzes dTTP and UTP. Can also hydrolyze TTP and the modified nucleotides 5-methyl-UTP (m(5)UTP), pseudo-UTP and 5-methyl-CTP (m(5)CTP). Has weak activity with CTP. May have a dual role in cell division arrest and in preventing the incorporation of modified nucleotides into cellular nucleic acids. Important in maintenance of cell shape. The sequence is that of dTTP/UTP pyrophosphatase (yhdE) from Escherichia coli (strain K12).